Consider the following 437-residue polypeptide: MNAYQNKNITIIGLGKTGLSCVDYLLSQQANIRVIDTRKKPTGIDKLPQNIPLHTGSLNQEWLLESDMIVISPGLAVKTPEIQTALKAGVEVIGDIELFCRAATKPIVGITGSNGKSTVTTLVYEMAKAAGVKVGMGGNIGIPALSLLNEDCELYVLELSSFQLETTYSLKAAAATVLNVTEDHMDRYMDLEDYRQAKLRIYHNAEVGVLNNEDKLTFGEGENQARQTVSFAENSADYWLKTENGKQYLMVKDEVILPCEEATLVGRHNYMNILAATALAQAVGINLDAIRTALRHFKGLDHRFQLAHQANGVRWINDSKATNVGSTVAALSGLYVEGKLHLLLGGDGKGADFSELAELINQPHIICYCFGRDGALLAKLSSQSYLFETMEQAIAFLRPTLQSGDMVLLSPACASLDQFASFEKRGEEFTRLAQCLA.

An ATP-binding site is contributed by 112–118; that stretch reads GSNGKST.

The protein belongs to the MurCDEF family.

The protein resides in the cytoplasm. It carries out the reaction UDP-N-acetyl-alpha-D-muramoyl-L-alanine + D-glutamate + ATP = UDP-N-acetyl-alpha-D-muramoyl-L-alanyl-D-glutamate + ADP + phosphate + H(+). It functions in the pathway cell wall biogenesis; peptidoglycan biosynthesis. Its function is as follows. Cell wall formation. Catalyzes the addition of glutamate to the nucleotide precursor UDP-N-acetylmuramoyl-L-alanine (UMA). The sequence is that of UDP-N-acetylmuramoylalanine--D-glutamate ligase from Haemophilus influenzae (strain PittEE).